The primary structure comprises 505 residues: Maturase K (505 aa).

It belongs to the intron maturase 2 family. MatK subfamily.

Its subcellular location is the plastid. The protein resides in the chloroplast. Its function is as follows. Usually encoded in the trnK tRNA gene intron. Probably assists in splicing its own and other chloroplast group II introns. In Allamanda cathartica (Yellow allamanda), this protein is Maturase K.